The primary structure comprises 155 residues: Cytochrome c-550 (155 aa).

The N-terminal stretch at methionine 1–alanine 20 is a signal peptide. The residue at position 21 (glutamine 21) is a Pyrrolidone carboxylic acid. Positions 35, 38, 39, and 120 each coordinate heme c. A propeptide spanning residues alanine 150–asparagine 155 is cleaved from the precursor.

Binds 1 heme c group covalently per subunit.

This chain is Cytochrome c-550 (cycA), found in Paracoccus denitrificans.